The primary structure comprises 317 residues: Zinc finger protein 771 (317 aa).

The span at 1–17 (MPGEQQAEEEEEEEMQE) shows a compositional bias: acidic residues. Positions 1–63 (MPGEQQAEEE…APSADPARPH (63 aa)) are disordered. Lys33 participates in a covalent cross-link: Glycyl lysine isopeptide (Lys-Gly) (interchain with G-Cter in SUMO2). Positions 33-49 (KYEVVKLKIPMDNKEVP) are enriched in basic and acidic residues. C2H2-type zinc fingers lie at residues 63–85 (HACPDCGRAFARRSTLAKHARTH), 91–113 (FGCTECGRRFSQKSALTKHGRTH), 119–141 (YECPECDKRFSAASNLRQHRRRH), 147–169 (YACAHCGRRFAQSSNYAQHLRVH), 175–197 (YACPDCGRAFGGSSCLARHRRTH), 203–225 (YACADCGTRFAQSSALAKHRRVH), 231–253 (HRCAVCGRRFGHRSNLAEHARTH), and 259–281 (YPCAECGRRFRLSSHFIRHRRAH).

The protein belongs to the krueppel C2H2-type zinc-finger protein family.

The protein localises to the nucleus. In terms of biological role, may be involved in transcriptional regulation. The sequence is that of Zinc finger protein 771 (ZNF771) from Homo sapiens (Human).